The primary structure comprises 60 residues: Large ribosomal subunit protein eL37 (60 aa).

Residues cysteine 19, cysteine 22, cysteine 34, and cysteine 37 each coordinate Zn(2+). A C4-type zinc finger spans residues 19 to 37 (CRRCGRISFHAQKKVCSSC).

This sequence belongs to the eukaryotic ribosomal protein eL37 family. Zn(2+) serves as cofactor.

Binds to the 23S rRNA. In Methanoregula boonei (strain DSM 21154 / JCM 14090 / 6A8), this protein is Large ribosomal subunit protein eL37.